The following is a 540-amino-acid chain: NXPE family member 1 (540 aa).

Positions Met-1–Ser-22 are cleaved as a signal peptide. N-linked (GlcNAc...) asparagine glycans are attached at residues Asn-24, Asn-42, Asn-87, Asn-155, Asn-205, and Asn-291.

It belongs to the NXPE family. In terms of tissue distribution, intestine, and to a lesser extent in kidney.

The protein resides in the secreted. This is NXPE family member 1 (NXPE1) from Oryctolagus cuniculus (Rabbit).